Here is a 779-residue protein sequence, read N- to C-terminus: LPS-assembly protein LptD (779 aa).

The first 23 residues, methionine 1–alanine 23, serve as a signal peptide directing secretion.

Belongs to the LptD family. Component of the lipopolysaccharide transport and assembly complex. Interacts with LptE and LptA.

It localises to the cell outer membrane. Together with LptE, is involved in the assembly of lipopolysaccharide (LPS) at the surface of the outer membrane. The chain is LPS-assembly protein LptD from Haemophilus ducreyi (strain 35000HP / ATCC 700724).